A 331-amino-acid polypeptide reads, in one-letter code: Phenylalanine--tRNA ligase alpha subunit (331 aa).

Glu-258 lines the Mg(2+) pocket.

The protein belongs to the class-II aminoacyl-tRNA synthetase family. Phe-tRNA synthetase alpha subunit type 1 subfamily. In terms of assembly, tetramer of two alpha and two beta subunits. It depends on Mg(2+) as a cofactor.

It is found in the cytoplasm. The catalysed reaction is tRNA(Phe) + L-phenylalanine + ATP = L-phenylalanyl-tRNA(Phe) + AMP + diphosphate + H(+). The sequence is that of Phenylalanine--tRNA ligase alpha subunit (pheS) from Synechocystis sp. (strain ATCC 27184 / PCC 6803 / Kazusa).